We begin with the raw amino-acid sequence, 318 residues long: Electron transfer flavoprotein subunit alpha (318 aa).

257–285 (LYIALGISGAIQHRAGMQTSKTIVAVNKD) provides a ligand contact to FAD.

Belongs to the ETF alpha-subunit/FixB family. In terms of assembly, heterodimer of an alpha and a beta subunit. FAD serves as cofactor.

Functionally, the electron transfer flavoprotein serves as a specific electron acceptor for other dehydrogenases. It transfers the electrons to the main respiratory chain via ETF-ubiquinone oxidoreductase (ETF dehydrogenase). This chain is Electron transfer flavoprotein subunit alpha (etfA), found in Mycobacterium leprae (strain TN).